The following is an 878-amino-acid chain: Phosphoenolpyruvate carboxylase (878 aa).

Active-site residues include H138 and K545.

It belongs to the PEPCase type 1 family. Mg(2+) is required as a cofactor.

The enzyme catalyses oxaloacetate + phosphate = phosphoenolpyruvate + hydrogencarbonate. Its function is as follows. Forms oxaloacetate, a four-carbon dicarboxylic acid source for the tricarboxylic acid cycle. The polypeptide is Phosphoenolpyruvate carboxylase (Shewanella loihica (strain ATCC BAA-1088 / PV-4)).